The chain runs to 364 residues: MVQVSTHSATQSIPMEGEALKNWLQTRANQIIAGDRLSKQEALALTAIEGQENIFSLCEAADRIRQACCGNTVDLCSIINIKSGSCSENCSFCSQSVHHPGQDSPIYGLKSREEIVTHAKAAADAGAKRFCLVSQGRGLKYNSPKSQEFEEILATVQEIIETAKIKPCCALGELTLPQAQALKEAGVTRYNHNLEASENFYPNVVSTHSWQDRVETVKNLKAAGIQACTGGIIGMGESWTDRIDLAFSLAELEVESVPINLLNPRSGTPLGHLPKLEPFTALKAIAIFRFILPQQILRYAGGREAVMGELQNLGLKSGINAMLIGHYLTTLGQPPQQDQAMLADLSLIGGEAPIPGEYQPQQAT.

A Radical SAM core domain is found at 68–303 (CCGNTVDLCS…QQILRYAGGR (236 aa)). Cysteine 86, cysteine 90, and cysteine 93 together coordinate [4Fe-4S] cluster. [2Fe-2S] cluster contacts are provided by cysteine 131, cysteine 168, cysteine 228, and arginine 298.

It belongs to the radical SAM superfamily. Biotin synthase family. As to quaternary structure, homodimer. [4Fe-4S] cluster serves as cofactor. [2Fe-2S] cluster is required as a cofactor.

The catalysed reaction is (4R,5S)-dethiobiotin + (sulfur carrier)-SH + 2 reduced [2Fe-2S]-[ferredoxin] + 2 S-adenosyl-L-methionine = (sulfur carrier)-H + biotin + 2 5'-deoxyadenosine + 2 L-methionine + 2 oxidized [2Fe-2S]-[ferredoxin]. It functions in the pathway cofactor biosynthesis; biotin biosynthesis; biotin from 7,8-diaminononanoate: step 2/2. Catalyzes the conversion of dethiobiotin (DTB) to biotin by the insertion of a sulfur atom into dethiobiotin via a radical-based mechanism. This is Biotin synthase from Microcystis aeruginosa (strain NIES-843 / IAM M-2473).